The chain runs to 688 residues: Elongation factor G (688 aa).

Residues 8-282 (EKFRNIGIMA…AVVDFMPSPL (275 aa)) enclose the tr-type G domain. Residues 17 to 24 (AHIDAGKT), 81 to 85 (DTPGH), and 135 to 138 (NKMD) each bind GTP. The interval 282-305 (LDIPPIKGTDPETGEETDRPADDN) is disordered.

The protein belongs to the TRAFAC class translation factor GTPase superfamily. Classic translation factor GTPase family. EF-G/EF-2 subfamily.

It localises to the cytoplasm. In terms of biological role, catalyzes the GTP-dependent ribosomal translocation step during translation elongation. During this step, the ribosome changes from the pre-translocational (PRE) to the post-translocational (POST) state as the newly formed A-site-bound peptidyl-tRNA and P-site-bound deacylated tRNA move to the P and E sites, respectively. Catalyzes the coordinated movement of the two tRNA molecules, the mRNA and conformational changes in the ribosome. This Clostridium kluyveri (strain NBRC 12016) protein is Elongation factor G.